Consider the following 116-residue polypeptide: Methionine-R-sulfoxide reductase B1 (116 aa).

The 106-residue stretch at 1–106 (MSFCSFFGGE…FSSSLKFVPK (106 aa)) folds into the MsrB domain. 4 residues coordinate Zn(2+): C23, C26, C71, and C74. The active-site Nucleophile is U95. A non-standard amino acid (selenocysteine) is located at residue U95.

Belongs to the MsrB Met sulfoxide reductase family. Zn(2+) serves as cofactor. Truncated MSRB1/SEPX1 proteins produced by failed UGA/Sec decoding are ubiquitinated by the CRL2(FEM1C) E3 ubiquitin-protein ligase complex.

Its subcellular location is the cytoplasm. It localises to the nucleus. The protein localises to the cytoskeleton. The enzyme catalyses L-methionyl-[protein] + [thioredoxin]-disulfide + H2O = L-methionyl-(R)-S-oxide-[protein] + [thioredoxin]-dithiol. The catalysed reaction is [thioredoxin]-disulfide + L-methionine + H2O = L-methionine (R)-S-oxide + [thioredoxin]-dithiol. In terms of biological role, methionine-sulfoxide reductase that specifically reduces methionine (R)-sulfoxide back to methionine. While in many cases, methionine oxidation is the result of random oxidation following oxidative stress, methionine oxidation is also a post-translational modification that takes place on specific residue. Acts as a regulator of actin assembly by reducing methionine (R)-sulfoxide mediated by MICALs (MICAL1, MICAL2 or MICAL3) on actin, thereby promoting filament repolymerization. Plays a role in innate immunity by reducing oxidized actin, leading to actin repolymerization in macrophages. This chain is Methionine-R-sulfoxide reductase B1 (MSRB1), found in Pongo abelii (Sumatran orangutan).